Consider the following 207-residue polypeptide: Ribosomal RNA small subunit methyltransferase G (207 aa).

Residues Gly-73, Leu-78, 124–125 (VE), and Arg-139 contribute to the S-adenosyl-L-methionine site.

Belongs to the methyltransferase superfamily. RNA methyltransferase RsmG family.

The protein localises to the cytoplasm. The catalysed reaction is guanosine(527) in 16S rRNA + S-adenosyl-L-methionine = N(7)-methylguanosine(527) in 16S rRNA + S-adenosyl-L-homocysteine. In terms of biological role, specifically methylates the N7 position of guanine in position 527 of 16S rRNA. The sequence is that of Ribosomal RNA small subunit methyltransferase G from Shigella dysenteriae serotype 1 (strain Sd197).